A 127-amino-acid chain; its full sequence is Anti-adapter protein IraD (127 aa).

The protein belongs to the GpW/Gp25 family. IraD subfamily. Interacts with RssB.

The protein localises to the cytoplasm. Functionally, inhibits RpoS proteolysis by regulating RssB activity, thereby increasing the stability of the sigma stress factor RpoS during oxidative stress. Its effect on RpoS stability is due to its interaction with RssB, which probably blocks the interaction of RssB with RpoS, and the consequent delivery of the RssB-RpoS complex to the ClpXP protein degradation pathway. This is Anti-adapter protein IraD from Escherichia coli O127:H6 (strain E2348/69 / EPEC).